A 184-amino-acid chain; its full sequence is ATP synthase subunit b, chloroplastic (184 aa).

The helical transmembrane segment at 4–24 (IINLVIFSGYWPIAGNFGLNT) threads the bilayer.

Belongs to the ATPase B chain family. As to quaternary structure, F-type ATPases have 2 components, F(1) - the catalytic core - and F(0) - the membrane proton channel. F(1) has five subunits: alpha(3), beta(3), gamma(1), delta(1), epsilon(1). F(0) has four main subunits: a(1), b(1), b'(1) and c(10-14). The alpha and beta chains form an alternating ring which encloses part of the gamma chain. F(1) is attached to F(0) by a central stalk formed by the gamma and epsilon chains, while a peripheral stalk is formed by the delta, b and b' chains.

Its subcellular location is the plastid. It localises to the chloroplast thylakoid membrane. F(1)F(0) ATP synthase produces ATP from ADP in the presence of a proton or sodium gradient. F-type ATPases consist of two structural domains, F(1) containing the extramembraneous catalytic core and F(0) containing the membrane proton channel, linked together by a central stalk and a peripheral stalk. During catalysis, ATP synthesis in the catalytic domain of F(1) is coupled via a rotary mechanism of the central stalk subunits to proton translocation. Its function is as follows. Component of the F(0) channel, it forms part of the peripheral stalk, linking F(1) to F(0). The protein is ATP synthase subunit b, chloroplastic of Physcomitrium patens (Spreading-leaved earth moss).